We begin with the raw amino-acid sequence, 337 residues long: GTP 3',8-cyclase (337 aa).

The 226-residue stretch at 17-242 (AFQRRYYYLR…QSKGLLDGPA (226 aa)) folds into the Radical SAM core domain. Arg-26 provides a ligand contact to GTP. Positions 33 and 37 each coordinate [4Fe-4S] cluster. Tyr-39 contacts S-adenosyl-L-methionine. Position 40 (Cys-40) interacts with [4Fe-4S] cluster. Arg-76 is a GTP binding site. Gly-80 provides a ligand contact to S-adenosyl-L-methionine. Thr-107 serves as a coordination point for GTP. Ser-131 contributes to the S-adenosyl-L-methionine binding site. Lys-168 serves as a coordination point for GTP. Met-202 is a binding site for S-adenosyl-L-methionine. 2 residues coordinate [4Fe-4S] cluster: Cys-265 and Cys-268. 270–272 (RLR) is a binding site for GTP. Cys-282 is a [4Fe-4S] cluster binding site.

This sequence belongs to the radical SAM superfamily. MoaA family. In terms of assembly, monomer and homodimer. It depends on [4Fe-4S] cluster as a cofactor.

The catalysed reaction is GTP + AH2 + S-adenosyl-L-methionine = (8S)-3',8-cyclo-7,8-dihydroguanosine 5'-triphosphate + 5'-deoxyadenosine + L-methionine + A + H(+). The protein operates within cofactor biosynthesis; molybdopterin biosynthesis. In terms of biological role, catalyzes the cyclization of GTP to (8S)-3',8-cyclo-7,8-dihydroguanosine 5'-triphosphate. In Pasteurella multocida (strain Pm70), this protein is GTP 3',8-cyclase.